Here is a 316-residue protein sequence, read N- to C-terminus: WSCD family member GA21586 (316 aa).

A helical transmembrane segment spans residues 8–28; the sequence is FFGVSATIIIYIGGVLFLSMN. Residues asparagine 78, asparagine 150, asparagine 226, and asparagine 232 are each glycosylated (N-linked (GlcNAc...) asparagine).

This sequence belongs to the WSCD family.

Its subcellular location is the membrane. The polypeptide is WSCD family member GA21586 (Drosophila pseudoobscura pseudoobscura (Fruit fly)).